Reading from the N-terminus, the 235-residue chain is Phosphoribosylaminoimidazole-succinocarboxamide synthase (235 aa).

Belongs to the SAICAR synthetase family.

The enzyme catalyses 5-amino-1-(5-phospho-D-ribosyl)imidazole-4-carboxylate + L-aspartate + ATP = (2S)-2-[5-amino-1-(5-phospho-beta-D-ribosyl)imidazole-4-carboxamido]succinate + ADP + phosphate + 2 H(+). The protein operates within purine metabolism; IMP biosynthesis via de novo pathway; 5-amino-1-(5-phospho-D-ribosyl)imidazole-4-carboxamide from 5-amino-1-(5-phospho-D-ribosyl)imidazole-4-carboxylate: step 1/2. This chain is Phosphoribosylaminoimidazole-succinocarboxamide synthase, found in Thermoanaerobacter pseudethanolicus (strain ATCC 33223 / 39E) (Clostridium thermohydrosulfuricum).